The primary structure comprises 198 residues: uncharacterized protein (198 aa).

The interval Gly166–Arg198 is disordered.

This is an uncharacterized protein from Coxiella burnetii (strain RSA 493 / Nine Mile phase I).